A 274-amino-acid chain; its full sequence is Large ribosomal subunit protein uL2c (274 aa).

Residues 224-274 (NPVDHPHGGGEGRAPIGRKKPTTPWGYPALGRKSRKRNKYSEKFILRHRSK) are disordered.

The protein belongs to the universal ribosomal protein uL2 family. In terms of assembly, part of the 50S ribosomal subunit.

It is found in the plastid. The protein localises to the chloroplast. This chain is Large ribosomal subunit protein uL2c (rpl2), found in Ipomoea purpurea (Common morning glory).